The sequence spans 315 residues: Small ribosomal subunit biogenesis GTPase RsgA (315 aa).

One can recognise a CP-type G domain in the interval 79–243 (LSKESHILGA…LIDTPGIKGF (165 aa)). Residues 128–131 (NKID) and 182–190 (GHSGVGKSS) contribute to the GTP site. Cys-267, Cys-272, His-274, and Cys-280 together coordinate Zn(2+).

It belongs to the TRAFAC class YlqF/YawG GTPase family. RsgA subfamily. As to quaternary structure, monomer. Associates with 30S ribosomal subunit, binds 16S rRNA. Requires Zn(2+) as cofactor.

It localises to the cytoplasm. Its function is as follows. One of several proteins that assist in the late maturation steps of the functional core of the 30S ribosomal subunit. Helps release RbfA from mature subunits. May play a role in the assembly of ribosomal proteins into the subunit. Circularly permuted GTPase that catalyzes slow GTP hydrolysis, GTPase activity is stimulated by the 30S ribosomal subunit. The polypeptide is Small ribosomal subunit biogenesis GTPase RsgA (Porphyromonas gingivalis (strain ATCC 33277 / DSM 20709 / CIP 103683 / JCM 12257 / NCTC 11834 / 2561)).